A 147-amino-acid chain; its full sequence is Protein MioC (147 aa).

The Flavodoxin-like domain occupies 4–143 (ITLISGSTLG…PAEEWLGSWV (140 aa)).

The protein belongs to the flavodoxin family. MioC subfamily. In terms of assembly, homodimer. Requires FMN as cofactor.

Functionally, probable electron transporter required for biotin synthase activity. This Escherichia coli (strain K12) protein is Protein MioC (mioC).